The primary structure comprises 265 residues: Cytochrome c oxidase subunit 3 (265 aa).

6 helical membrane passes run 16–36 (PWPF…ILWL), 40–60 (PSFL…FSWW), 83–103 (CVAL…WTFF), 159–179 (VGPF…FLVQ), 198–218 (VFYL…IWLM), and 241–261 (IWYW…VYVW).

Belongs to the cytochrome c oxidase subunit 3 family. As to quaternary structure, component of the cytochrome c oxidase (complex IV, CIV), a multisubunit enzyme composed of a catalytic core of 3 subunits and several supernumerary subunits. The complex exists as a monomer or a dimer and forms supercomplexes (SCs) in the inner mitochondrial membrane with ubiquinol-cytochrome c oxidoreductase (cytochrome b-c1 complex, complex III, CIII).

It is found in the mitochondrion inner membrane. The catalysed reaction is 4 Fe(II)-[cytochrome c] + O2 + 8 H(+)(in) = 4 Fe(III)-[cytochrome c] + 2 H2O + 4 H(+)(out). In terms of biological role, component of the cytochrome c oxidase, the last enzyme in the mitochondrial electron transport chain which drives oxidative phosphorylation. The respiratory chain contains 3 multisubunit complexes succinate dehydrogenase (complex II, CII), ubiquinol-cytochrome c oxidoreductase (cytochrome b-c1 complex, complex III, CIII) and cytochrome c oxidase (complex IV, CIV), that cooperate to transfer electrons derived from NADH and succinate to molecular oxygen, creating an electrochemical gradient over the inner membrane that drives transmembrane transport and the ATP synthase. Cytochrome c oxidase is the component of the respiratory chain that catalyzes the reduction of oxygen to water. Electrons originating from reduced cytochrome c in the intermembrane space (IMS) are transferred via the dinuclear copper A center (CU(A)) of subunit 2 and heme A of subunit 1 to the active site in subunit 1, a binuclear center (BNC) formed by heme A3 and copper B (CU(B)). The BNC reduces molecular oxygen to 2 water molecules using 4 electrons from cytochrome c in the IMS and 4 protons from the mitochondrial matrix. In Mytilus edulis (Blue mussel), this protein is Cytochrome c oxidase subunit 3 (COIII).